The sequence spans 133 residues: Ribonuclease P protein component (133 aa).

This sequence belongs to the RnpA family. In terms of assembly, consists of a catalytic RNA component (M1 or rnpB) and a protein subunit.

The catalysed reaction is Endonucleolytic cleavage of RNA, removing 5'-extranucleotides from tRNA precursor.. Its function is as follows. RNaseP catalyzes the removal of the 5'-leader sequence from pre-tRNA to produce the mature 5'-terminus. It can also cleave other RNA substrates such as 4.5S RNA. The protein component plays an auxiliary but essential role in vivo by binding to the 5'-leader sequence and broadening the substrate specificity of the ribozyme. The protein is Ribonuclease P protein component of Synechococcus sp. (strain JA-2-3B'a(2-13)) (Cyanobacteria bacterium Yellowstone B-Prime).